Reading from the N-terminus, the 354-residue chain is NADH-quinone oxidoreductase subunit H (354 aa).

8 helical membrane passes run 25-45 (LVRI…LILW), 91-111 (WLYL…WAVI), 126-146 (LLYA…AGWA), 170-190 (MGFA…SEIV), 205-225 (FLSW…ISGI), 253-273 (MAFA…SALA), 290-310 (FIPG…VFIW), and 330-350 (VFLP…MSPL).

It belongs to the complex I subunit 1 family. In terms of assembly, NDH-1 is composed of 14 different subunits. Subunits NuoA, H, J, K, L, M, N constitute the membrane sector of the complex.

Its subcellular location is the cell inner membrane. The catalysed reaction is a quinone + NADH + 5 H(+)(in) = a quinol + NAD(+) + 4 H(+)(out). In terms of biological role, NDH-1 shuttles electrons from NADH, via FMN and iron-sulfur (Fe-S) centers, to quinones in the respiratory chain. The immediate electron acceptor for the enzyme in this species is believed to be ubiquinone. Couples the redox reaction to proton translocation (for every two electrons transferred, four hydrogen ions are translocated across the cytoplasmic membrane), and thus conserves the redox energy in a proton gradient. This subunit may bind ubiquinone. The protein is NADH-quinone oxidoreductase subunit H of Burkholderia thailandensis (strain ATCC 700388 / DSM 13276 / CCUG 48851 / CIP 106301 / E264).